The sequence spans 478 residues: NADH-ubiquinone oxidoreductase 49 kDa subunit, mitochondrial (478 aa).

The N-terminal 42 residues, 1–42 (MATTLFRLAGRNAKRHCMRQSTTIAHNLNSTRAFSASALRRY), are a transit peptide targeting the mitochondrion. The [4Fe-4S] cluster site is built by Cys-341, Cys-347, and Cys-362.

The protein belongs to the complex I 49 kDa subunit family. In terms of assembly, complex I is composed of about 40 different subunits. [4Fe-4S] cluster serves as cofactor.

It is found in the mitochondrion inner membrane. The catalysed reaction is a ubiquinone + NADH + 5 H(+)(in) = a ubiquinol + NAD(+) + 4 H(+)(out). Functionally, core subunit of the mitochondrial membrane respiratory chain NADH dehydrogenase (Complex I) that is believed to belong to the minimal assembly required for catalysis. Complex I functions in the transfer of electrons from NADH to the respiratory chain. The immediate electron acceptor for the enzyme is believed to be ubiquinone. This is NADH-ubiquinone oxidoreductase 49 kDa subunit, mitochondrial (nuo-49) from Neurospora crassa (strain ATCC 24698 / 74-OR23-1A / CBS 708.71 / DSM 1257 / FGSC 987).